A 235-amino-acid polypeptide reads, in one-letter code: Ribonuclease 3 (235 aa).

The RNase III domain occupies 11-137 (RAWCAEALGY…VVGALYLDGG (127 aa)). Mg(2+) is bound at residue Glu-51. Asp-55 is an active-site residue. 2 residues coordinate Mg(2+): Asp-123 and Glu-126. Glu-126 is a catalytic residue. Residues 164–233 (DYKTQLQEQL…ARQALMPEHH (70 aa)) enclose the DRBM domain.

The protein belongs to the ribonuclease III family. In terms of assembly, homodimer. Requires Mg(2+) as cofactor.

The protein resides in the cytoplasm. The enzyme catalyses Endonucleolytic cleavage to 5'-phosphomonoester.. Digests double-stranded RNA. Involved in the processing of primary rRNA transcript to yield the immediate precursors to the large and small rRNAs (23S and 16S). Processes some mRNAs, and tRNAs when they are encoded in the rRNA operon. Processes pre-crRNA and tracrRNA of type II CRISPR loci if present in the organism. In Symbiobacterium thermophilum (strain DSM 24528 / JCM 14929 / IAM 14863 / T), this protein is Ribonuclease 3.